Reading from the N-terminus, the 468-residue chain is GTPase Der (468 aa).

EngA-type G domains lie at 3 to 167 (PTLV…PYAE) and 179 to 352 (PVIA…TAAM). Residues 9-16 (GRPNVGKS), 56-60 (DTGGF), 119-122 (NKAE), 185-192 (GRPNVGKS), 232-236 (DTAGL), and 297-300 (NKWD) contribute to the GTP site. Residues 353–437 (AHIPTPKLTR…PLRVEFRTGH (85 aa)) form the KH-like domain. The interval 434-468 (RTGHNPYAGKKAPPLTEEEARRAHSRRRRNRKKYG) is disordered. Residues 456-468 (AHSRRRRNRKKYG) are compositionally biased toward basic residues.

Belongs to the TRAFAC class TrmE-Era-EngA-EngB-Septin-like GTPase superfamily. EngA (Der) GTPase family. Associates with the 50S ribosomal subunit.

In terms of biological role, GTPase that plays an essential role in the late steps of ribosome biogenesis. The protein is GTPase Der of Nitrosomonas eutropha (strain DSM 101675 / C91 / Nm57).